A 943-amino-acid polypeptide reads, in one-letter code: Isoleucine--tRNA ligase (943 aa).

The 'HIGH' region motif lies at 59–69 (PYANGRIHLGH). L-isoleucyl-5'-AMP is bound at residue E577. Positions 618–622 (KMSKS) match the 'KMSKS' region motif. ATP is bound at residue K621. Zn(2+) contacts are provided by C906, C909, C926, and C929.

This sequence belongs to the class-I aminoacyl-tRNA synthetase family. IleS type 1 subfamily. As to quaternary structure, monomer. The cofactor is Zn(2+).

The protein resides in the cytoplasm. The catalysed reaction is tRNA(Ile) + L-isoleucine + ATP = L-isoleucyl-tRNA(Ile) + AMP + diphosphate. In terms of biological role, catalyzes the attachment of isoleucine to tRNA(Ile). As IleRS can inadvertently accommodate and process structurally similar amino acids such as valine, to avoid such errors it has two additional distinct tRNA(Ile)-dependent editing activities. One activity is designated as 'pretransfer' editing and involves the hydrolysis of activated Val-AMP. The other activity is designated 'posttransfer' editing and involves deacylation of mischarged Val-tRNA(Ile). This is Isoleucine--tRNA ligase from Stenotrophomonas maltophilia (strain K279a).